The primary structure comprises 477 residues: Mitochondrial adenyl nucleotide antiporter SLC25A24 (477 aa).

A regulatory N-terminal domain region spans residues 1 to 173 (MLRWLRGFVL…RFWKHSTGID (173 aa)). Residues 1–197 (MLRWLRGFVL…EKKSGQWWRQ (197 aa)) lie on the Mitochondrial intermembrane side of the membrane. 4 EF-hand domains span residues 19–54 (EPPT…LGIP), 61–85 (EKIF…KYLK), 86–121 (DHEK…LGLT), and 122–157 (ISEQ…NPVT). Ca(2+) contacts are provided by D32, N34, D36, V38, E43, D68, N70, D72, K74, E79, D99, N101, D103, K105, E110, D135, D137, T139, T141, and E146. Residues 159-168 (IEEIIRFWKH) are linker region. Positions 174 to 477 (IGDSLTIPDE…MKQTLGVTQK (304 aa)) are C-terminal transmembrane transporter domain. Solcar repeat units lie at residues 192–278 (GQWW…YKKL), 286–371 (IGTF…LKSH), and 383–471 (PGVM…MKQT). A helical transmembrane segment spans residues 198–215 (LLAGGVAGAVSRTSTAPL). Topologically, residues 216-252 (DRLKVMMQVHGSKSAKMNIYGGFQQMVKEGGIRSLWR) are mitochondrial matrix. Residues 253–272 (GNGTNVIKIAPETAVKFWAY) form a helical membrane-spanning segment. Over 273-295 (EQYKKLLTEEGQKIGTFERFVSG) the chain is Mitochondrial intermembrane. Residues 296-309 (SMAGATAQTFIYPM) traverse the membrane as a helical segment. The Mitochondrial matrix portion of the chain corresponds to 310–345 (EVLKTRLAVGKTGQYSGMFDCAKKILKYEGMGAFYK). K320 carries the N6-acetyllysine; alternate modification. The residue at position 320 (K320) is an N6-succinyllysine; alternate. K336 carries the post-translational modification N6-acetyllysine. Residues 346-365 (GYVPNLLGIIPYAGIDLAVY) traverse the membrane as a helical segment. Over 366 to 388 (ELLKSHWLDNFAKDSVNPGVMVL) the chain is Mitochondrial intermembrane. The helical transmembrane segment at 389 to 406 (LGCGALSSTCGQLASYPL) threads the bilayer. The Mitochondrial matrix portion of the chain corresponds to 407-445 (ALVRTRMQAQAMIEKSPQLNMVGLFRRILSKEGLPGLYR). K437 is subject to N6-acetyllysine; alternate. K437 is subject to N6-succinyllysine; alternate. A helical membrane pass occupies residues 446–465 (GITPNFMKVLPAVGISYVVY). The Mitochondrial intermembrane portion of the chain corresponds to 466–477 (ENMKQTLGVTQK).

Belongs to the mitochondrial carrier (TC 2.A.29) family. Monomer.

The protein localises to the mitochondrion inner membrane. The catalysed reaction is Mg(2+)(out) + phosphate(in) + ATP(out) = Mg(2+)(in) + phosphate(out) + ATP(in). It catalyses the reaction ADP(out) + phosphate(in) + H(+)(out) = ADP(in) + phosphate(out) + H(+)(in). It carries out the reaction AMP(out) + phosphate(in) = AMP(in) + phosphate(out). The enzyme catalyses phosphate(in) + ATP(out) + 2 H(+)(out) = phosphate(out) + ATP(in) + 2 H(+)(in). The catalysed reaction is dADP(in) + ADP(out) = dADP(out) + ADP(in). It catalyses the reaction Mg(2+)(in) + ADP(out) + ATP(in) + H(+)(out) = Mg(2+)(out) + ADP(in) + ATP(out) + H(+)(in). It carries out the reaction ADP(out) + diphosphate(in) = ADP(in) + diphosphate(out). The enzyme catalyses dAMP(in) + ADP(out) + H(+)(out) = dAMP(out) + ADP(in) + H(+)(in). The catalysed reaction is 3'-AMP(in) + ADP(out) + H(+)(out) = 3'-AMP(out) + ADP(in) + H(+)(in). It catalyses the reaction dAMP(out) + phosphate(in) = dAMP(in) + phosphate(out). It carries out the reaction 3'-AMP(out) + phosphate(in) = 3'-AMP(in) + phosphate(out). The enzyme catalyses dADP(out) + phosphate(in) + H(+)(out) = dADP(in) + phosphate(out) + H(+)(in). Activated by an increase in cytosolic calcium levels that induce a conformational change of the N-terminal regulatory domain, uncapping the channel and allowing transport. Inhibited by bathophenanthroline, mersalyl, p-hydroxymercuribenzoate, bromcresol purple and tannic acid. Its function is as follows. Electroneutral antiporter that mediates the transport of adenyl nucleotides through the inner mitochondrial membrane. Originally identified as an ATP-magnesium/inorganic phosphate antiporter, it also acts as a broad specificity adenyl nucleotide antiporter. By regulating the mitochondrial matrix adenyl nucleotide pool could adapt to changing cellular energetic demands and indirectly regulate adenyl nucleotide-dependent metabolic pathways. In vitro, a low activity is also observed with guanyl and pyrimidine nucleotides. May play a role in protecting cells against oxidative stress-induced cell death, by buffering calcium levels in the mitochondrial matrix through the formation of calcium-phosphate precipitates. In Bos taurus (Bovine), this protein is Mitochondrial adenyl nucleotide antiporter SLC25A24 (SLC25A24).